Reading from the N-terminus, the 113-residue chain is UPF0060 membrane protein CV_3485 (113 aa).

The next 4 membrane-spanning stretches (helical) occupy residues Gly12–Leu32, Ser37–Leu57, Ala67–Val87, and Arg91–Pro111.

This sequence belongs to the UPF0060 family.

Its subcellular location is the cell inner membrane. The polypeptide is UPF0060 membrane protein CV_3485 (Chromobacterium violaceum (strain ATCC 12472 / DSM 30191 / JCM 1249 / CCUG 213 / NBRC 12614 / NCIMB 9131 / NCTC 9757 / MK)).